Here is an 860-residue protein sequence, read N- to C-terminus: DNA mismatch repair protein MutS (860 aa).

Residue 607 to 614 (GPNMSGKS) participates in ATP binding.

The protein belongs to the DNA mismatch repair MutS family.

Functionally, this protein is involved in the repair of mismatches in DNA. It is possible that it carries out the mismatch recognition step. This protein has a weak ATPase activity. This chain is DNA mismatch repair protein MutS, found in Listeria welshimeri serovar 6b (strain ATCC 35897 / DSM 20650 / CCUG 15529 / CIP 8149 / NCTC 11857 / SLCC 5334 / V8).